Here is a 1381-residue protein sequence, read N- to C-terminus: Hepatocyte growth factor receptor (1381 aa).

A signal peptide spans 1–24 (MKAPAVLVPGILVLLFTLVQRSNG). Over 25-932 (ECKEALAKSE…VIVQPDQNFT (908 aa)) the chain is Extracellular. One can recognise a Sema domain in the interval 27–515 (KEALAKSEMN…TGKKITKIPL (489 aa)). An N-linked (GlcNAc...) asparagine glycan is attached at Asn45. Intrachain disulfides connect Cys95/Cys101, Cys98/Cys160, Cys133/Cys141, and Cys172/Cys175. An N-linked (GlcNAc...) asparagine glycan is attached at Asn106. Asn149 is a glycosylation site (N-linked (GlcNAc...) asparagine). N-linked (GlcNAc...) asparagine glycosylation occurs at Asn202. 2 cysteine pairs are disulfide-bonded: Cys298/Cys363 and Cys385/Cys397. N-linked (GlcNAc...) asparagine glycans are attached at residues Asn399 and Asn405. Intrachain disulfides connect Cys520–Cys538, Cys526–Cys561, Cys529–Cys545, and Cys541–Cys551. IPT/TIG domains are found at residues 563–655 (PAIY…FSYV), 657–739 (PIIT…FSYR), and 742–836 (PIVY…LIYV). An O-linked (Man) threonine glycan is attached at Thr582. 2 N-linked (GlcNAc...) asparagine glycosylation sites follow: Asn607 and Asn635. Thr676 and Thr761 each carry an O-linked (Man) threonine glycan. N-linked (GlcNAc...) asparagine glycans are attached at residues Asn785, Asn879, and Asn930. The helical transmembrane segment at 933–955 (GLIAGVVSISIALLLLLGLFLWL) threads the bilayer. Residues 956 to 1381 (KKRKQIKDLG…EDNADDEVDT (426 aa)) lie on the Cytoplasmic side of the membrane. Ser966 is modified (phosphoserine). The residue at position 977 (Thr977) is a Phosphothreonine. Phosphoserine occurs at positions 990, 997, and 1000. A Phosphotyrosine modification is found at Tyr1003. One can recognise a Protein kinase domain in the interval 1078-1345 (VHFNEVIGRG…RISAIFSTFI (268 aa)). Residues 1084 to 1092 (IGRGHFGCV) and Lys1110 each bind ATP. Residue Asp1204 is the Proton acceptor of the active site. The interval 1212–1381 (LDEKFTVKVA…EDNADDEVDT (170 aa)) is interaction with RANBP9. A Phosphotyrosine modification is found at Tyr1230. 2 positions are modified to phosphotyrosine; by autocatalysis: Tyr1234 and Tyr1235. Thr1289 is subject to Phosphothreonine. The tract at residues 1320-1359 (WHPKAEMRPSFSELVSRISAIFSTFIGEHYVHVNATYVNV) is interaction with MUC20. Phosphotyrosine; by autocatalysis is present on residues Tyr1349 and Tyr1356. At Tyr1365 the chain carries Phosphotyrosine.

The protein belongs to the protein kinase superfamily. Tyr protein kinase family. In terms of assembly, heterodimer made of an alpha chain (50 kDa) and a beta chain (145 kDa) which are disulfide linked. Binds PLXNB1. Interacts when phosphorylated with downstream effectors including STAT3, PIK3R1, SRC, PCLG1, GRB2 and GAB1. Interacts with SPSB1, SPSB2 and SPSB4. Interacts with INPP5D/SHIP1. When phosphorylated at Tyr-1356, interacts with INPPL1/SHIP2. Interacts with RANBP9 and RANBP10, as well as SPSB1, SPSB2, SPSB3 and SPSB4. SPSB1 binding occurs in the presence and in the absence of HGF, however HGF treatment has a positive effect on this interaction. Interacts with MUC20; prevents interaction with GRB2 and suppresses hepatocyte growth factor-induced cell proliferation. Interacts with GRB10. Interacts with PTPN1 and PTPN2. Interacts with HSP90AA1 and HSP90AB1; the interaction suppresses MET kinase activity. Interacts with tensin TNS3. Interacts (when phosphorylated) with tensin TNS4 (via SH2 domain); the interaction increases MET protein stability by inhibiting MET endocytosis and subsequent lysosomal degradation. In terms of processing, autophosphorylated in response to ligand binding on Tyr-1234 and Tyr-1235 in the kinase domain leading to further phosphorylation of Tyr-1349 and Tyr-1356 in the C-terminal multifunctional docking site. Dephosphorylated by PTPRJ at Tyr-1349 and Tyr-1365. Dephosphorylated by PTPN1 and PTPN2. Post-translationally, ubiquitinated. Ubiquitination by CBL regulates the receptor stability and activity through proteasomal degradation. O-mannosylation of IPT/TIG domains by TMEM260 is required for protein maturation. O-mannosylated residues are composed of single mannose glycans that are not elongated or modified.

It localises to the membrane. It catalyses the reaction L-tyrosyl-[protein] + ATP = O-phospho-L-tyrosyl-[protein] + ADP + H(+). In its inactive state, the C-terminal tail interacts with the catalytic domain and inhibits the kinase activity. Upon ligand binding, the C-terminal tail is displaced and becomes phosphorylated, thus increasing the kinase activity. Its function is as follows. Receptor tyrosine kinase that transduces signals from the extracellular matrix into the cytoplasm by binding to hepatocyte growth factor/HGF ligand. Regulates many physiological processes including proliferation, scattering, morphogenesis and survival. Ligand binding at the cell surface induces autophosphorylation of MET on its intracellular domain that provides docking sites for downstream signaling molecules. Following activation by ligand, interacts with the PI3-kinase subunit PIK3R1, PLCG1, SRC, GRB2, STAT3 or the adapter GAB1. Recruitment of these downstream effectors by MET leads to the activation of several signaling cascades including the RAS-ERK, PI3 kinase-AKT, or PLCgamma-PKC. The RAS-ERK activation is associated with the morphogenetic effects while PI3K/AKT coordinates prosurvival effects. During embryonic development, MET signaling plays a role in gastrulation, development and migration of muscles and neuronal precursors, angiogenesis and kidney formation. In adults, participates in wound healing as well as organ regeneration and tissue remodeling. Also promotes differentiation and proliferation of hematopoietic cells. This chain is Hepatocyte growth factor receptor (MET), found in Papio anubis (Olive baboon).